Reading from the N-terminus, the 1145-residue chain is Protocadherin-19 (1145 aa).

An N-terminal signal peptide occupies residues M1–A21. Cadherin domains lie at L22–F129, P130–F238, G239–I346, S350–F453, S454–I563, and I569–M672. The Extracellular portion of the chain corresponds to L22 to S678. Ca(2+)-binding residues include E31, E32, D88, and D90. Residues C93 and C99 are joined by a disulfide bond. The Ca(2+) site is built by D121, N123, D124, N125, E140, D155, D157, E199, D212, D230, S231, N232, D233, N234, and E249. N-linked (GlcNAc...) asparagine glycosylation occurs at N261. Ca(2+) contacts are provided by D264, D266, N270, D305, E307, D338, N340, D341, N342, E360, D375, D377, N381, D412, and E414. An N-linked (GlcNAc...) asparagine glycan is attached at N420. Ca(2+) is bound by residues D427, D445, E446, N447, D448, N449, E464, D479, D481, N485, N522, E524, and D537. N-linked (GlcNAc...) asparagine glycosylation occurs at N485. N546 is a glycosylation site (N-linked (GlcNAc...) asparagine). Ca(2+) is bound by residues D555, V556, N557, D558, and N559. N570 is a glycosylation site (N-linked (GlcNAc...) asparagine). The Ca(2+) site is built by D594, D596, N600, and D646. N676 is a glycosylation site (N-linked (GlcNAc...) asparagine). The helical transmembrane segment at L679–V699 threads the bilayer. Over A700 to L1145 the chain is Cytoplasmic. 2 disordered regions span residues G901 to V921 and L1094 to L1145. 2 stretches are compositionally biased toward basic and acidic residues: residues D906–V921 and S1106–L1145.

In terms of assembly, homodimer; antiparallel.

It localises to the cell membrane. Functionally, calcium-dependent cell-adhesion protein. The sequence is that of Protocadherin-19 (Pcdh19) from Mus musculus (Mouse).